Reading from the N-terminus, the 373-residue chain is Lipoyl synthase (373 aa).

The segment at 12 to 36 (HVVSNDHPSSSPLQPGVKQSGEDKI) is disordered. [4Fe-4S] cluster contacts are provided by cysteine 81, cysteine 86, cysteine 92, cysteine 107, cysteine 111, cysteine 114, and serine 323. In terms of domain architecture, Radical SAM core spans 93–312 (FSHGTATFMI…EEYGMALGFS (220 aa)). Residues 346–373 (PAVSSTEHRERHTIASKSASKTESIPHR) form a disordered region. Polar residues predominate over residues 360-373 (ASKSASKTESIPHR).

This sequence belongs to the radical SAM superfamily. Lipoyl synthase family. Requires [4Fe-4S] cluster as cofactor.

Its subcellular location is the cytoplasm. It catalyses the reaction [[Fe-S] cluster scaffold protein carrying a second [4Fe-4S](2+) cluster] + N(6)-octanoyl-L-lysyl-[protein] + 2 oxidized [2Fe-2S]-[ferredoxin] + 2 S-adenosyl-L-methionine + 4 H(+) = [[Fe-S] cluster scaffold protein] + N(6)-[(R)-dihydrolipoyl]-L-lysyl-[protein] + 4 Fe(3+) + 2 hydrogen sulfide + 2 5'-deoxyadenosine + 2 L-methionine + 2 reduced [2Fe-2S]-[ferredoxin]. It participates in protein modification; protein lipoylation via endogenous pathway; protein N(6)-(lipoyl)lysine from octanoyl-[acyl-carrier-protein]: step 2/2. Functionally, catalyzes the radical-mediated insertion of two sulfur atoms into the C-6 and C-8 positions of the octanoyl moiety bound to the lipoyl domains of lipoate-dependent enzymes, thereby converting the octanoylated domains into lipoylated derivatives. This is Lipoyl synthase from Xylella fastidiosa (strain M12).